A 467-amino-acid polypeptide reads, in one-letter code: Sialic acid-binding Ig-like lectin 7 (467 aa).

Residues 1–18 form the signal peptide; it reads MLLLLLLPLLWGRERVEG. Residues 19–353 lie on the Extracellular side of the membrane; it reads QKSNRKDYSL…KMRPVSGVLL (335 aa). One can recognise an Ig-like V-type domain in the interval 39–122; sequence GMCVHVRCSF…ARMSDAGRYF (84 aa). The cysteines at positions 46 and 106 are disulfide-linked. Asn105 is a glycosylation site (N-linked (GlcNAc...) asparagine). N-acetylneuraminate is bound by residues Arg124 and 131–135; that span reads KWNYK. N-linked (GlcNAc...) asparagine glycans are attached at residues Asn142 and Asn165. An Ig-like C2-type 1 domain is found at 150 to 233; it reads PNILIPGTLE…AGVTTNRTIQ (84 aa). An intrachain disulfide couples Cys168 to Cys217. 4 N-linked (GlcNAc...) asparagine glycosylation sites follow: Asn229, Asn235, Asn242, and Asn260. Residues 240–336 form the Ig-like C2-type 2 domain; that stretch reads PQNLTVTVFQ…GSQHVSLNLS (97 aa). A disulfide bond links Cys276 and Cys320. N-linked (GlcNAc...) asparagine glycosylation is present at Asn334. The chain crosses the membrane as a helical span at residues 354-376; it reads GAVGGAGATALVFLSFCVIFIVV. The Cytoplasmic segment spans residues 377–467; sequence RSCRKKSARP…NEYSEIKIPK (91 aa). A compositionally biased stretch (polar residues) spans 401 to 412; the sequence is IRGSASQGNLTE. Residues 401–431 form a disordered region; the sequence is IRGSASQGNLTESWADDNPRHHGLAAHSSGE. The residue at position 429 (Ser429) is a Phosphoserine. Positions 435–440 match the ITIM motif motif; that stretch reads IQYAPL. The segment at 443–467 is disordered; the sequence is HKGEPQDLSGQEATNNEYSEIKIPK. Over residues 450–460 the composition is skewed to polar residues; it reads LSGQEATNNEY.

This sequence belongs to the immunoglobulin superfamily. SIGLEC (sialic acid binding Ig-like lectin) family. As to quaternary structure, interacts with PTPN6/SHP-1 upon phosphorylation. Tyrosine phosphorylated. As to expression, predominantly expressed by resting and activated natural killer cells and at lower levels by granulocytes and monocytes. High expression found in placenta, liver, lung, spleen, and peripheral blood leukocytes.

The protein resides in the membrane. Functionally, putative adhesion molecule that mediates sialic-acid dependent binding to cells. Preferentially binds to alpha-2,3- and alpha-2,6-linked sialic acid. Also binds disialogangliosides (disialogalactosyl globoside, disialyl lactotetraosylceramide and disialyl GalNAc lactotetraoslylceramide). The sialic acid recognition site may be masked by cis interactions with sialic acids on the same cell surface. In the immune response, may act as an inhibitory receptor upon ligand induced tyrosine phosphorylation by recruiting cytoplasmic phosphatase(s) via their SH2 domain(s) that block signal transduction through dephosphorylation of signaling molecules. Mediates inhibition of natural killer cells cytotoxicity. May play a role in hemopoiesis. Inhibits differentiation of CD34+ cell precursors towards myelomonocytic cell lineage and proliferation of leukemic myeloid cells (in vitro). The protein is Sialic acid-binding Ig-like lectin 7 (SIGLEC7) of Homo sapiens (Human).